Reading from the N-terminus, the 56-residue chain is Large ribosomal subunit protein bL33C (56 aa).

It belongs to the bacterial ribosomal protein bL33 family.

This chain is Large ribosomal subunit protein bL33C, found in Sorangium cellulosum (strain So ce56) (Polyangium cellulosum (strain So ce56)).